The following is a 100-amino-acid chain: Large ribosomal subunit protein eL21 (100 aa).

This sequence belongs to the eukaryotic ribosomal protein eL21 family.

The polypeptide is Large ribosomal subunit protein eL21 (Pyrobaculum arsenaticum (strain DSM 13514 / JCM 11321 / PZ6)).